A 103-amino-acid chain; its full sequence is Large ribosomal subunit protein uL24 (103 aa).

It belongs to the universal ribosomal protein uL24 family. Part of the 50S ribosomal subunit.

One of two assembly initiator proteins, it binds directly to the 5'-end of the 23S rRNA, where it nucleates assembly of the 50S subunit. Its function is as follows. One of the proteins that surrounds the polypeptide exit tunnel on the outside of the subunit. This Enterococcus faecalis (strain ATCC 700802 / V583) protein is Large ribosomal subunit protein uL24.